The following is a 428-amino-acid chain: Enolase (428 aa).

Glutamine 163 serves as a coordination point for (2R)-2-phosphoglycerate. Residue glutamate 205 is the Proton donor of the active site. The Mg(2+) site is built by aspartate 242, glutamate 285, and aspartate 312. Residues lysine 337, arginine 366, serine 367, and lysine 388 each coordinate (2R)-2-phosphoglycerate. Lysine 337 acts as the Proton acceptor in catalysis.

The protein belongs to the enolase family. It depends on Mg(2+) as a cofactor.

The protein resides in the cytoplasm. Its subcellular location is the secreted. It is found in the cell surface. The enzyme catalyses (2R)-2-phosphoglycerate = phosphoenolpyruvate + H2O. Its pathway is carbohydrate degradation; glycolysis; pyruvate from D-glyceraldehyde 3-phosphate: step 4/5. In terms of biological role, catalyzes the reversible conversion of 2-phosphoglycerate (2-PG) into phosphoenolpyruvate (PEP). It is essential for the degradation of carbohydrates via glycolysis. This chain is Enolase, found in Neisseria meningitidis serogroup C / serotype 2a (strain ATCC 700532 / DSM 15464 / FAM18).